A 359-amino-acid polypeptide reads, in one-letter code: Probable dual-specificity RNA methyltransferase RlmN (359 aa).

The Proton acceptor role is filled by E91. The 233-residue stretch at 97 to 329 folds into the Radical SAM core domain; that stretch reads QHYGHSVCVT…KKNGVNCVVR (233 aa). C104 and C340 are oxidised to a cystine. [4Fe-4S] cluster contacts are provided by C111, C115, and C118. Residues 163–164, S195, 218–220, and N296 each bind S-adenosyl-L-methionine; these read GE and SLH. C340 (S-methylcysteine intermediate) is an active-site residue.

This sequence belongs to the radical SAM superfamily. RlmN family. Requires [4Fe-4S] cluster as cofactor.

It localises to the cytoplasm. It catalyses the reaction adenosine(2503) in 23S rRNA + 2 reduced [2Fe-2S]-[ferredoxin] + 2 S-adenosyl-L-methionine = 2-methyladenosine(2503) in 23S rRNA + 5'-deoxyadenosine + L-methionine + 2 oxidized [2Fe-2S]-[ferredoxin] + S-adenosyl-L-homocysteine. The enzyme catalyses adenosine(37) in tRNA + 2 reduced [2Fe-2S]-[ferredoxin] + 2 S-adenosyl-L-methionine = 2-methyladenosine(37) in tRNA + 5'-deoxyadenosine + L-methionine + 2 oxidized [2Fe-2S]-[ferredoxin] + S-adenosyl-L-homocysteine. Functionally, specifically methylates position 2 of adenine 2503 in 23S rRNA and position 2 of adenine 37 in tRNAs. The sequence is that of Probable dual-specificity RNA methyltransferase RlmN from Streptococcus pyogenes serotype M3 (strain ATCC BAA-595 / MGAS315).